A 756-amino-acid polypeptide reads, in one-letter code: Hormone-sensitive lipase (756 aa).

Residues 350-352 carry the Involved in the stabilization of the negatively charged intermediate by the formation of the oxyanion hole motif; it reads HGG. The active site involves Ser-424. Disordered regions lie at residues 542–570 and 581–600; these read SVSK…TDSL and RNSS…ETLG. Ser-552 carries the phosphoserine; by PKA modification. Ser-554 carries the phosphoserine; by AMPK modification. Residues 581–596 are compositionally biased toward polar residues; it reads RNSSDTTDTPELSLSA. Residues Ser-595 and Ser-649 each carry the phosphoserine modification. Active-site residues include Asp-692 and His-722.

The protein belongs to the 'GDXG' lipolytic enzyme family. Monomer and homodimer. Interacts with CAVIN1 in the adipocyte cytoplasm. Interacts with PLIN5. In terms of processing, phosphorylation by AMPK reduces its translocation towards the lipid droplets.

It is found in the cell membrane. The protein resides in the membrane. The protein localises to the caveola. It localises to the cytoplasm. Its subcellular location is the cytosol. It is found in the lipid droplet. The enzyme catalyses a diacylglycerol + H2O = a monoacylglycerol + a fatty acid + H(+). It catalyses the reaction a triacylglycerol + H2O = a diacylglycerol + a fatty acid + H(+). It carries out the reaction a monoacylglycerol + H2O = glycerol + a fatty acid + H(+). The catalysed reaction is Hydrolyzes glycerol monoesters of long-chain fatty acids.. The enzyme catalyses 1,2-di-(9Z-octadecenoyl)-glycerol + (9Z)-octadecenoate + H(+) = 1,2,3-tri-(9Z-octadecenoyl)-glycerol + H2O. It catalyses the reaction 2,3-di-(9Z)-octadecenoyl-sn-glycerol + H2O = 2-(9Z-octadecenoyl)-glycerol + (9Z)-octadecenoate + H(+). It carries out the reaction cholesteryl (9Z-octadecenoate) + H2O = cholesterol + (9Z)-octadecenoate + H(+). The catalysed reaction is 1,2,3-tri-(9Z-octadecenoyl)-glycerol + H2O = di-(9Z)-octadecenoylglycerol + (9Z)-octadecenoate + H(+). The enzyme catalyses all-trans-retinyl hexadecanoate + H2O = all-trans-retinol + hexadecanoate + H(+). It catalyses the reaction 1,2-di-(9Z-octadecenoyl)-glycerol + H2O = (9Z-octadecenoyl)-glycerol + (9Z)-octadecenoate + H(+). It carries out the reaction 2-(5Z,8Z,11Z,14Z-eicosatetraenoyl)-glycerol + H2O = glycerol + (5Z,8Z,11Z,14Z)-eicosatetraenoate + H(+). The catalysed reaction is 1-(9Z-octadecenoyl)-glycerol + H2O = glycerol + (9Z)-octadecenoate + H(+). The enzyme catalyses 2-(9Z-octadecenoyl)-glycerol + H2O = glycerol + (9Z)-octadecenoate + H(+). It catalyses the reaction 1-O-hexadecyl-2-acetyl-sn-glycerol + H2O = 1-O-hexadecyl-sn-glycerol + acetate + H(+). It carries out the reaction 1,2-di-(9Z-octadecenoyl)-sn-glycerol + H2O = (9Z-octadecenoyl)-glycerol + (9Z)-octadecenoate + H(+). The catalysed reaction is 1,3-di-(9Z-octadecenoyl)-glycerol + H2O = 1-(9Z-octadecenoyl)-glycerol + (9Z)-octadecenoate + H(+). The enzyme catalyses 1,2-di-(9Z-octadecenoyl)-glycerol + H2O = 2-(9Z-octadecenoyl)-glycerol + (9Z)-octadecenoate + H(+). It participates in glycerolipid metabolism; triacylglycerol degradation. Functionally, lipase with broad substrate specificity, catalyzing the hydrolysis of triacylglycerols (TAGs), diacylglycerols (DAGs), monoacylglycerols (MAGs), cholesteryl esters and retinyl esters. Shows a preferential hydrolysis of DAGs over TAGs and MAGs. Preferentially hydrolyzes fatty acid (FA) esters at the sn-3 position of the glycerol backbone in DAGs and FA esters at the sn-1 and sn-2 positions of the glycerol backbone in TAGs. Catalyzes the hydrolysis of 2-arachidonoylglycerol, an endocannabinoid and of 2-acetyl monoalkylglycerol ether, the penultimate precursor of the pathway for de novo synthesis of platelet-activating factor. In adipose tissue and heart, it primarily hydrolyzes stored triglycerides to free fatty acids, while in steroidogenic tissues, it principally converts cholesteryl esters to free cholesterol for steroid hormone production. The sequence is that of Hormone-sensitive lipase (LIPE) from Bos taurus (Bovine).